Here is a 367-residue protein sequence, read N- to C-terminus: C-C chemokine receptor type 9 (367 aa).

Residues 1-46 lie on the Extracellular side of the membrane; it reads MVPTEATSLILNPSDDYGYDGTPPMEYDTNLTDYFCEKSHVRQFAG. Asn30 carries N-linked (GlcNAc...) asparagine glycosylation. Intrachain disulfides connect Cys36/Cys287 and Cys117/Cys196. Residues 47 to 72 form a helical membrane-spanning segment; that stretch reads HFLPPLYWLVFIVGAVGNSLVILVYW. Topologically, residues 73–83 are cytoplasmic; that stretch reads YCTRVKTMTDM. A helical membrane pass occupies residues 84-107; sequence FLLNLAIADLLFLTTLPFWAIAAA. Topologically, residues 108–118 are extracellular; it reads DQWKFQTFMCK. A helical membrane pass occupies residues 119 to 148; sequence VVNSMYKMNFYSCVLLIMCISVDRYIAIAQ. Residues 149-157 lie on the Cytoplasmic side of the membrane; the sequence is AMRAQMWRQ. A helical membrane pass occupies residues 158–183; sequence KRLLYSKMVCFTIWVMAAALCLPELL. Over 184 to 206 the chain is Extracellular; the sequence is YSQVKEEHGTAICTVVYSSNEST. The N-linked (GlcNAc...) asparagine glycan is linked to Asn203. A helical transmembrane segment spans residues 207-241; the sequence is KLKSAVLTLKVTLGFFLPFVVMACCYAIIIHTLIR. The Cytoplasmic portion of the chain corresponds to 242-246; the sequence is AKKSS. The chain crosses the membrane as a helical span at residues 247-281; that stretch reads KHKALKVTITVLTVFVLSQFPHNCVLLVQTIDAYA. Residues 282–288 are Extracellular-facing; that stretch reads TFISSCA. Residues 289-319 form a helical membrane-spanning segment; it reads LSIKIDICFQVTQTVAFFHSCLNPVLYVFVG. The Cytoplasmic segment spans residues 320 to 367; the sequence is ERFRRDLVKTLKNLGCISQAQWVSFTRREGSLKLSSMLLETTSGALSF.

It belongs to the G-protein coupled receptor 1 family.

It is found in the cell membrane. In terms of biological role, receptor for chemokine SCYA25/TECK. Subsequently transduces a signal by increasing the intracellular calcium ions level. In Ovis aries (Sheep), this protein is C-C chemokine receptor type 9 (CCR9).